Reading from the N-terminus, the 270-residue chain is Glucan endo-1,3-beta-glucosidase (270 aa).

Positions 1-18 are cleaved as a signal peptide; that stretch reads MNAFTFPLLLAFCAFAHG. The GH16 domain maps to 22-270; that stretch reads LDWEDEFNGG…VEYVKKWTWN (249 aa). Glu-137 acts as the Nucleophile in catalysis. Glu-142 acts as the Proton donor in catalysis.

This sequence belongs to the glycosyl hydrolase 16 family.

The protein localises to the secreted. It carries out the reaction Hydrolysis of (1-&gt;3)-beta-D-glucosidic linkages in (1-&gt;3)-beta-D-glucans.. With respect to regulation, ca(2+) does not affect the enzyme activity nor the thermostability. Other cations, such as Mg(2+), Mn(2+), Cu(2+), Zn(2+), Ag(+) or Hg(2+) do not cause any serious adverse effect on the activity. Also no significant change in the activity in response to the addition of 1 mM EDTA. Its function is as follows. Hydrolyzes laminarin majorily to glucose (G1), laminaribiose (L2), laminaritriose (L3), laminaritetraose (L4) and laminaripentaose (L5). Hydrolyzes laminarioligosaccharides L3, L4, L5 and laminarihexaose (L6) to G1, L2 and L3. Hardly hydrolyzes L2. Does not hydrolyze lichenan, pustulan, carboxymethyl cellulose, locust bean gum or soluble starch. In Cryptopygus antarcticus (Antarctic springtail), this protein is Glucan endo-1,3-beta-glucosidase.